The primary structure comprises 29 residues: Snaclec multactivase regulatory subunit (29 aa).

The C-type lectin domain maps to 1–29; the sequence is DCLPGWSVYEGRCYKVFNQKTWKAAEKFC. Cys2 and Cys13 are oxidised to a cystine.

Belongs to the snaclec family. As to quaternary structure, heterodimer of a metalloproteinase subunit and a regulatory subunit comprising two homologous polypeptides disulfide-linked. As to expression, expressed by the venom gland.

Its subcellular location is the secreted. Its function is as follows. Multactivase, a carinactivase-like calcium-dependent prothrombin activator, activates prothrombin via recognition of the calcium ion bound conformation of its gamma-carboxyglutamic acid (GLA) domain, and the subsequent conversion of prothrombin to active thrombin is catalyzed by the catalytic subunit. This Echis multisquamatus (Central Asian sand viper) protein is Snaclec multactivase regulatory subunit.